Here is a 317-residue protein sequence, read N- to C-terminus: Melanocyte-stimulating hormone receptor (317 aa).

The Extracellular segment spans residues 1 to 37 (MPLQGPQRRLLGSLNSTLPATPYLGLTTNQTEPPCLE). Asparagine 29 carries an N-linked (GlcNAc...) asparagine glycan. A helical membrane pass occupies residues 38–63 (VSIPDGLFLSLGLVSLVENVLVVTAI). The Cytoplasmic portion of the chain corresponds to 64–72 (AKNRNLHSP). Residues 73 to 93 (MYYFICCLAVSDLLVSMSNVL) form a helical membrane-spanning segment. Over 94–118 (EMAILLLLEAGVLATQASVLQQLDN) the chain is Extracellular. A helical membrane pass occupies residues 119-140 (IIDVLICGSMVSSLCFLGSIAV). Over 141–163 (DRYISIFYALRYHSIMMLPRVWR) the chain is Cytoplasmic. A helical membrane pass occupies residues 164-183 (AIVAIWVVSVLSSTLFIAYY). Residues 184 to 191 (NHTAVLLC) lie on the Extracellular side of the membrane. Residues 192–211 (LVTFFVAMLVLMAVLYVHML) form a helical membrane-spanning segment. At 212 to 240 (ARACQHARGIARLHKRQHPIHQGFGLKGA) the chain is on the cytoplasmic side. A helical membrane pass occupies residues 241–266 (ATLTILLGVFFLCWGPFFLHLSLLIL). Over 267 to 279 (CPQHPTCGCVFKN) the chain is Extracellular. Residues 280–300 (FKLFLTLILCSAIVDPLIYAF) form a helical membrane-spanning segment. Residues 301–317 (RSQELRKTLQEVLLCSW) are Cytoplasmic-facing. Cysteine 315 is lipidated: S-palmitoyl cysteine.

It belongs to the G-protein coupled receptor 1 family. In terms of assembly, interacts with MGRN1, but does not undergo MGRN1-mediated ubiquitination; this interaction competes with GNAS-binding and thus inhibits agonist-induced cAMP production. Interacts with OPN3; the interaction results in a decrease in MC1R-mediated cAMP signaling and ultimately a decrease in melanin production in melanocytes.

It localises to the cell membrane. In terms of biological role, receptor for MSH (alpha, beta and gamma) and ACTH. The activity of this receptor is mediated by G proteins which activate adenylate cyclase. Mediates melanogenesis, the production of eumelanin (black/brown) and phaeomelanin (red/yellow), via regulation of cAMP signaling in melanocytes. The chain is Melanocyte-stimulating hormone receptor (MC1R) from Equus caballus (Horse).